Reading from the N-terminus, the 411-residue chain is MSVGCACPGCSSKSFKLYSPKEPPNGNAFPPFHPGTMLDRDVGPTPMYPPTYLEPGIGRHTPYGNQTDYRIFELNKRLQNWTEECDNLWWDAFTTEFFEDDAMLTITFCLEDGPKRYTIGRTLIPRYFRSIFEGGATELYYVLKHPKEAFHSNFVSLDCDQGSMVTQHGKPMFTQVCVEGRLYLEFMFDDMMRIKTWHFSIRQHRELIPRSILAMHAQDPQMLDQLSKNITRCGLSNSTLNYLRLCVILEPMQELMSRHKTYSLSPRDCLKTCLFQKWQRMVAPPAEPARQQPSKRRKRKMSGGSTMSSGGGNTNNSNSKKKSPASTFALSSQVPDVMVVGEPTLMGGEFGDEDERLITRLENTQFDAANGIDDEDSFNNSPALGANSPWNSKPPSSQESKSENPTSQASQ.

N-acetylserine is present on serine 2. At threonine 61 the chain carries Phosphothreonine. 2 positions are modified to phosphoserine: serine 265 and serine 302. 2 disordered regions span residues 284–330 and 367–411; these read PPAE…TFAL and DAAN…QASQ. The segment covering 302-318 has biased composition (low complexity); the sequence is SGGSTMSSGGGNTNNSN. The region spanning 336 to 375 is the LIM interaction domain (LID) domain; the sequence is DVMVVGEPTLMGGEFGDEDERLITRLENTQFDAANGIDDE.

This sequence belongs to the LDB family. Interacts with ESR1. Forms homodimers and heterodimers. Interacts with and activates LHX1/LIM1. Interacts with the LIM domains of ISL1 and LMO2. Can assemble in a complex with LMO2 and TAL1/SCL but does not interact with TAL1/SCL directly. Strongly interacts with the LIM2 domain of LMX1A and more weakly with the LIM1 domain. Homodimerization is not required for, and does not effect, LMX1A-binding. Component of a nuclear TAL-1 complex composed at least of CBFA2T3, LDB1, TAL1 and TCF3. Interacts with LHX6 and LHX9. At neuronal promoters, forms a complex with LHX3 involved in the specification of interneurons, in motor neurons, it is displaced by ISL1 to form a ternary complex in which ISL1 contacts both LHX3 and LDB1. Interacts with SLK; leading to negatively regulate SLK kinase activity. Interacts with YWHAZ. Interacts with PRDM1/BLIMP1. Interacts with LMO4. Interacts with RLIM/RNF12; the interaction inhibits the ubiquitination of LMO proteins. In terms of processing, ubiquitinated by RLIM/RNF12, leading to its degradation by the proteasome. Expressed in multiple adult tissues including heart, brain, liver, kidney, testis, lung and muscle, with expression highest in the pituitary gland and skin.

It is found in the nucleus. In terms of biological role, binds to the LIM domain of a wide variety of LIM domain-containing transcription factors. May regulate the transcriptional activity of LIM-containing proteins by determining specific partner interactions. Plays a role in the development of interneurons and motor neurons in cooperation with LHX3 and ISL1. Acts synergistically with LHX1/LIM1 in axis formation and activation of gene expression. Acts with LMO2 in the regulation of red blood cell development, maintaining erythroid precursors in an immature state. The sequence is that of LIM domain-binding protein 1 (Ldb1) from Mus musculus (Mouse).